Consider the following 508-residue polypeptide: Lysine--tRNA ligase (508 aa).

Positions 418 and 425 each coordinate Mg(2+).

It belongs to the class-II aminoacyl-tRNA synthetase family. As to quaternary structure, homodimer. The cofactor is Mg(2+).

The protein localises to the cytoplasm. It catalyses the reaction tRNA(Lys) + L-lysine + ATP = L-lysyl-tRNA(Lys) + AMP + diphosphate. This Burkholderia pseudomallei (strain K96243) protein is Lysine--tRNA ligase.